We begin with the raw amino-acid sequence, 564 residues long: Glutamyl-tRNA(Gln) amidotransferase subunit B, mitochondrial (564 aa).

The transit peptide at 1 to 88 (MIRQCVSHRG…DTDAKLFSRA (88 aa)) directs the protein to the mitochondrion. The tract at residues 26–63 (PFHHPSPRPLGRKNWSTSDEAKSKRAAMRKGGAPPPEH) is disordered.

It belongs to the GatB/GatE family. GatB subfamily. As to quaternary structure, subunit of the heterotrimeric GatCAB amidotransferase (AdT) complex, composed of A, B and C subunits.

Its subcellular location is the mitochondrion. The catalysed reaction is L-glutamyl-tRNA(Gln) + L-glutamine + ATP + H2O = L-glutaminyl-tRNA(Gln) + L-glutamate + ADP + phosphate + H(+). Its function is as follows. Allows the formation of correctly charged Gln-tRNA(Gln) through the transamidation of misacylated Glu-tRNA(Gln) in the mitochondria. The reaction takes place in the presence of glutamine and ATP through an activated gamma-phospho-Glu-tRNA(Gln). This chain is Glutamyl-tRNA(Gln) amidotransferase subunit B, mitochondrial, found in Ajellomyces capsulatus (strain G186AR / H82 / ATCC MYA-2454 / RMSCC 2432) (Darling's disease fungus).